The primary structure comprises 293 residues: Inhibitory synaptic factor 1 (293 aa).

A disordered region spans residues 1 to 26 (MNIRGAPDLGQPSDDPSSGGERERIR). Residues 30 to 63 (KMVIGQLEGILRELKEVAKELREVVSQIDKLTSD) are a coiled coil. Disordered stretches follow at residues 120-186 (TPSD…RERV) and 200-293 (DDEE…RGKN). Residues 171–180 (VKSQLPQRTP) are compositionally biased toward polar residues. The span at 200–215 (DDEEGDGEQEVEEEEV) shows a compositional bias: acidic residues. Polar residues-rich tracts occupy residues 243-256 (SPLT…TLAP) and 264-286 (RNSS…TATR).

Belongs to the INSYN1 family. Interacts with GPHN.

It localises to the postsynaptic density. Component of the protein machinery at the inhibitory synapses, probably acting as a scaffold. Inhibitory synapses dampen neuronal activity through postsynaptic hyperpolarization. This synaptic inhibition is fundamental for the functioning of the central nervous system, shaping and orchestrating the flow of information through neuronal networks to generate a precise neural code. The sequence is that of Inhibitory synaptic factor 1 from Homo sapiens (Human).